We begin with the raw amino-acid sequence, 230 residues long: Demethylmenaquinone methyltransferase (230 aa).

S-adenosyl-L-methionine contacts are provided by residues Thr62, Asp80, Asp100–Gly101, and Ser117.

The protein belongs to the class I-like SAM-binding methyltransferase superfamily. MenG/UbiE family.

The enzyme catalyses a 2-demethylmenaquinol + S-adenosyl-L-methionine = a menaquinol + S-adenosyl-L-homocysteine + H(+). It functions in the pathway quinol/quinone metabolism; menaquinone biosynthesis; menaquinol from 1,4-dihydroxy-2-naphthoate: step 2/2. In terms of biological role, methyltransferase required for the conversion of demethylmenaquinol (DMKH2) to menaquinol (MKH2). This chain is Demethylmenaquinone methyltransferase, found in Corynebacterium efficiens (strain DSM 44549 / YS-314 / AJ 12310 / JCM 11189 / NBRC 100395).